A 98-amino-acid polypeptide reads, in one-letter code: Co-chaperonin GroES 3 (98 aa).

The protein belongs to the GroES chaperonin family. As to quaternary structure, heptamer of 7 subunits arranged in a ring. Interacts with the chaperonin GroEL.

Its subcellular location is the cytoplasm. In terms of biological role, together with the chaperonin GroEL, plays an essential role in assisting protein folding. The GroEL-GroES system forms a nano-cage that allows encapsulation of the non-native substrate proteins and provides a physical environment optimized to promote and accelerate protein folding. GroES binds to the apical surface of the GroEL ring, thereby capping the opening of the GroEL channel. The chain is Co-chaperonin GroES 3 from Mesorhizobium japonicum (strain LMG 29417 / CECT 9101 / MAFF 303099) (Mesorhizobium loti (strain MAFF 303099)).